Consider the following 4069-residue polypeptide: Cardiomyopathy-associated protein 5 (4069 aa).

23 disordered regions span residues 1–177 (MASR…SQVL), 341–387 (TVPS…DTPA), 442–525 (GLAA…EDSN), 538–558 (ESPL…VEHK), 597–705 (EYSV…VPSL), 732–793 (PSEE…RFTP), 844–872 (SSPD…APPL), 890–948 (LERY…FSPD), 979–1009 (TSPS…VSIP), 1041–1097 (ADEE…PEIP), 1160–1179 (VKEE…SVPA), 1205–1237 (RKEE…PESE), 1540–1575 (KETE…ELEN), 1594–1742 (PAVE…EEFQ), 1757–1809 (HPAD…ITEP), 1892–1988 (ENWM…VKLA), 2064–2175 (TISS…KKGI), 2187–2259 (FGSS…SGDG), 2385–2412 (PQQP…SIIL), 2425–2463 (SEDR…LENR), 2494–2527 (TQIT…NERP), 2653–2706 (QEGN…VGTQ), and 2750–2862 (SSRD…SDVP). Acidic residues predominate over residues 27 to 47 (ETEEESEGEEDETAAESEEEP). The span at 48 to 62 (DSRLSDQDEEGKIKQ) shows a compositional bias: basic and acidic residues. Residues 84–119 (TWETNSSRSSTPWASEESQTSGVCSREGSTVNSPPG) show a composition bias toward polar residues. The segment covering 130–153 (KVRKRTHKSKHGSPSLRRKGNRKR) has biased composition (basic residues). S155 carries the phosphoserine modification. Composition is skewed to polar residues over residues 156-177 (FESQ…SQVL) and 341-350 (TVPSYSSSGR). Residues 489–499 (LEPSISLSEPL) are compositionally biased toward low complexity. The span at 500 to 510 (MLEEPEKEEIE) shows a compositional bias: acidic residues. Position 631 is a phosphoserine (S631). Residues 640–659 (AYSPAAAPTSESSLSPSTTE) are compositionally biased toward low complexity. 3 stretches are compositionally biased toward polar residues: residues 664–673 (NQSPLFSTVT), 692–701 (PDSTSASEYS), and 752–775 (PSLS…TATS). Residues 1049–1063 (TAATPVSEQFSSSQK) are compositionally biased toward polar residues. Residues 1085–1094 (DKSEKAEIKP) show a composition bias toward basic and acidic residues. Residues 1214 to 1223 (QEATAHVSQD) are compositionally biased toward polar residues. Positions 1621 to 1630 (EPEKKDKPHQ) are enriched in basic and acidic residues. Over residues 1639–1662 (SEFSSDLGRQSGSIGTKQAKSPIT) the composition is skewed to polar residues. 3 stretches are compositionally biased toward basic and acidic residues: residues 1668–1687 (VLEK…ENRE), 1704–1714 (LREESQNEEIK), and 1786–1795 (ILDKLSEETG). Polar residues predominate over residues 1796–1808 (HPNSSQVLQSITE). Residues 1935–1955 (SKDHTCEVRKQVLPHSAEESH) are compositionally biased toward basic and acidic residues. Residues 1956–1980 (LSSQEAVSALDTSSGNTETLSSKSY) show a composition bias toward polar residues. Basic and acidic residues predominate over residues 2085–2124 (NEKEAHRSTPPFPEEKPLEESKMVQSKVIDDADEGKKPSP). A compositionally biased stretch (polar residues) spans 2145–2155 (SPESPEVTQNP). Basic and acidic residues-rich tracts occupy residues 2162-2172 (AKPDLPEEKGK) and 2232-2250 (KPAD…DEPR). Over residues 2387–2399 (QPKSASSNFASKN) the composition is skewed to polar residues. S2404 is subject to Phosphoserine. Residues 2441–2461 (ISEEETKLRSVSPTEKKDNLE) show a composition bias toward basic and acidic residues. Composition is skewed to basic and acidic residues over residues 2661–2681 (KSSR…ESEL), 2750–2769 (SSRD…ESEL), and 2777–2804 (ITKE…ETKS). Position 2813 is a phosphoserine (S2813). Residues 2830–2847 (AVKKKEMPRSELTPERHT) show a composition bias toward basic and acidic residues. Residues 2964-2988 (SIDQEESEQMQDKLEYLEEKASFKT) adopt a coiled-coil conformation. Residues 3015–3031 (PLKENKQKETHKTKEEI) show a composition bias toward basic and acidic residues. Disordered regions lie at residues 3015–3037 (PLKE…DSET), 3119–3156 (EKGH…PGMP), 3204–3231 (KKKE…SDTD), 3386–3421 (SGAT…QDEY), and 3465–3495 (EFAS…SSEV). The required for RYR2 clustering stretch occupies residues 3052–3365 (YFEKYTLIDY…GSHGNEVGNA (314 aa)). The span at 3128–3138 (PETQSQNSADR) shows a compositional bias: polar residues. A compositionally biased stretch (basic and acidic residues) spans 3139–3150 (NVSKDTKRDVDS). Residues 3213–3227 (EGDSVNSEASFPSRN) show a composition bias toward polar residues. S3228 is subject to Phosphoserine. A compositionally biased stretch (basic and acidic residues) spans 3477–3489 (EQKELGSERKEED). An amphipathic helix H1 region spans residues 3517-3544 (KCPISATDKVFGTHKDHEVSTLDTAISA). Positions 3544–3653 (AVKVQLAEFL…REAEELDEAV (110 aa)) form a coiled coil. Positions 3545–3672 (VKVQLAEFLE…ERLLSAMEST (128 aa)) are B-box coiled-coil; BBC. The tract at residues 3631–3648 (SMDTAKDTLETIVREAEE) is amphipathic helix H2. 2 Fibronectin type-III domains span residues 3704–3805 (VPQP…TAPS) and 3806–3898 (TPVI…TRGT). An amphipathic helix H3 region spans residues 3751-3767 (EVNELVEEYRLTVKESY). In terms of domain architecture, B30.2/SPRY spans 3880 to 4065 (NAFGTSEQSE…LHLGIEPPDS (186 aa)).

Interacts with PRKAR2A. Interacts with ACTN2 and DTNBP1/dysbindin. Interacts with DES. Interacts with DMD/dystrophin. Interacts with the calcineurin catalytic subunit PPP3CA. Interacts with TTN. Interacts with CAPN3; this interaction, which results in CMYA5 proteolysis, may protect CAPN3 from autolysis. Interacts with FSD2. Identified in a complex composed of FSD2, CMYA5 and RYR2. Phosphorylated by PKA. In terms of tissue distribution, expressed in skeletal muscle; at a strong level and in heart.

It localises to the nucleus. The protein resides in the sarcoplasmic reticulum. Its subcellular location is the cytoplasm. It is found in the perinuclear region. The protein localises to the myofibril. It localises to the sarcomere. The protein resides in the m line. In terms of biological role, may serve as an anchoring protein that mediates the subcellular compartmentation of protein kinase A (PKA) via binding to PRKAR2A. May function as a repressor of calcineurin-mediated transcriptional activity. May attenuate calcineurin ability to induce slow-fiber gene program in muscle and may negatively modulate skeletal muscle regeneration. Plays a role in the assembly of ryanodine receptor (RYR2) clusters in striated muscle. The sequence is that of Cardiomyopathy-associated protein 5 (CMYA5) from Homo sapiens (Human).